Reading from the N-terminus, the 415-residue chain is Carboxypeptidase B (415 aa).

An N-terminal signal peptide occupies residues 1 to 13 (MLLLLALVSVALA). Residues 14-108 (HASEEHFDGN…LESQFDSHTR (95 aa)) constitute a propeptide, activation peptide. The Peptidase M14 domain occupies 116–410 (KYNKWETIEA…LAVKYIANYV (295 aa)). Cys-171 and Cys-184 are joined by a disulfide. Residues His-174 and Glu-177 each contribute to the Zn(2+) site. Residues 174 to 177 (HARE), Arg-232, and 249 to 250 (NR) contribute to the substrate site. 2 disulfides stabilise this stretch: Cys-243–Cys-266 and Cys-257–Cys-271. Residue His-302 participates in Zn(2+) binding. Substrate contacts are provided by residues 303 to 304 (SY) and Tyr-354. Glu-376 acts as the Proton donor/acceptor in catalysis.

This sequence belongs to the peptidase M14 family. The cofactor is Zn(2+).

The protein resides in the secreted. The protein localises to the zymogen granule lumen. It catalyses the reaction Preferential release of a C-terminal lysine or arginine amino acid.. This is Carboxypeptidase B (Cpb1) from Rattus norvegicus (Rat).